We begin with the raw amino-acid sequence, 490 residues long: ATP synthase subunit beta, chloroplastic (490 aa).

An ATP-binding site is contributed by 170 to 177 (GGAGVGKT).

It belongs to the ATPase alpha/beta chains family. In terms of assembly, F-type ATPases have 2 components, CF(1) - the catalytic core - and CF(0) - the membrane proton channel. CF(1) has five subunits: alpha(3), beta(3), gamma(1), delta(1), epsilon(1). CF(0) has four main subunits: a(1), b(1), b'(1) and c(9-12).

Its subcellular location is the plastid. The protein localises to the chloroplast thylakoid membrane. The catalysed reaction is ATP + H2O + 4 H(+)(in) = ADP + phosphate + 5 H(+)(out). Its function is as follows. Produces ATP from ADP in the presence of a proton gradient across the membrane. The catalytic sites are hosted primarily by the beta subunits. The sequence is that of ATP synthase subunit beta, chloroplastic from Pinus koraiensis (Korean pine).